The primary structure comprises 137 residues: uncharacterized protein (137 aa).

Residues 4–118 (YEGNCLCKAI…CIDDKPDCYD (115 aa)) form the CENP-V/GFA domain. Residues Cys-8, Cys-10, Cys-27, Cys-29, Cys-32, Cys-71, and Cys-74 each coordinate Zn(2+).

The protein belongs to the Gfa family. Requires Zn(2+) as cofactor.

It localises to the cytoplasm. The protein resides in the nucleus. This is an uncharacterized protein from Schizosaccharomyces pombe (strain 972 / ATCC 24843) (Fission yeast).